The sequence spans 21 residues: Large ribosomal subunit protein uL10 (21 aa).

The protein belongs to the universal ribosomal protein uL10 family. Part of the ribosomal stalk of the 50S ribosomal subunit. The N-terminus interacts with L11 and the large rRNA to form the base of the stalk. The C-terminus forms an elongated spine to which L12 dimers bind in a sequential fashion forming a multimeric L10(L12)X complex.

In terms of biological role, forms part of the ribosomal stalk, playing a central role in the interaction of the ribosome with GTP-bound translation factors. The protein is Large ribosomal subunit protein uL10 (rplJ) of Proteus vulgaris.